The primary structure comprises 298 residues: ATP synthase F(1) complex subunit gamma, mitochondrial (298 aa).

The transit peptide at 1–25 (MFSRAGVAGLSAWTVQPQWIQVRNM) directs the protein to the mitochondrion. An N6-acetyllysine modification is found at Lys39. Lys49 bears the N6-succinyllysine mark. N6-acetyllysine is present on Lys55. The residue at position 115 (Lys115) is an N6-acetyllysine; alternate. At Lys115 the chain carries N6-succinyllysine; alternate. Ser146 carries the phosphoserine modification. Lys154 is modified (N6-acetyllysine; alternate). Position 154 is an N6-succinyllysine; alternate (Lys154). Lys197 is subject to N6-acetyllysine. Lys270 bears the N6-succinyllysine mark.

The protein belongs to the ATPase gamma chain family. In terms of assembly, component of the ATP synthase complex composed at least of ATP5F1A/subunit alpha, ATP5F1B/subunit beta, ATP5MC1/subunit c (homooctomer), MT-ATP6/subunit a, MT-ATP8/subunit 8, ATP5ME/subunit e, ATP5MF/subunit f, ATP5MG/subunit g, ATP5MK/subunit k, ATP5MJ/subunit j, ATP5F1C/subunit gamma, ATP5F1D/subunit delta, ATP5F1E/subunit epsilon, ATP5PF/subunit F6, ATP5PB/subunit b, ATP5PD/subunit d, ATP5PO/subunit OSCP. ATP synthase complex consists of a soluble F(1) head domain (subunits alpha(3) and beta(3)) - the catalytic core - and a membrane F(0) domain - the membrane proton channel (subunits c, a, 8, e, f, g, k and j). These two domains are linked by a central stalk (subunits gamma, delta, and epsilon) rotating inside the F1 region and a stationary peripheral stalk (subunits F6, b, d, and OSCP). Interacts with FLVCR2; this interaction occurs in the absence of heme and is disrupted upon heme binding.

Its subcellular location is the mitochondrion inner membrane. Its function is as follows. Subunit gamma, of the mitochondrial membrane ATP synthase complex (F(1)F(0) ATP synthase or Complex V) that produces ATP from ADP in the presence of a proton gradient across the membrane which is generated by electron transport complexes of the respiratory chain. ATP synthase complex consist of a soluble F(1) head domain - the catalytic core - and a membrane F(1) domain - the membrane proton channel. These two domains are linked by a central stalk rotating inside the F(1) region and a stationary peripheral stalk. During catalysis, ATP synthesis in the catalytic domain of F(1) is coupled via a rotary mechanism of the central stalk subunits to proton translocation. In vivo, can only synthesize ATP although its ATP hydrolase activity can be activated artificially in vitro. With the central stalk subunit delta, is essential for the biogenesis of F(1) catalytic part of the ATP synthase complex namely in the formation of F1 assembly intermediate. This Bos taurus (Bovine) protein is ATP synthase F(1) complex subunit gamma, mitochondrial.